The chain runs to 328 residues: 4-hydroxy-3-methylbut-2-enyl diphosphate reductase (328 aa).

[4Fe-4S] cluster is bound at residue cysteine 13. Positions 41 and 75 each coordinate (2E)-4-hydroxy-3-methylbut-2-enyl diphosphate. Dimethylallyl diphosphate-binding residues include histidine 41 and histidine 75. Isopentenyl diphosphate-binding residues include histidine 41 and histidine 75. [4Fe-4S] cluster is bound at residue cysteine 97. Histidine 125 contacts (2E)-4-hydroxy-3-methylbut-2-enyl diphosphate. Residue histidine 125 coordinates dimethylallyl diphosphate. Position 125 (histidine 125) interacts with isopentenyl diphosphate. Glutamate 127 functions as the Proton donor in the catalytic mechanism. Threonine 168 lines the (2E)-4-hydroxy-3-methylbut-2-enyl diphosphate pocket. Cysteine 229 serves as a coordination point for [4Fe-4S] cluster. 4 residues coordinate (2E)-4-hydroxy-3-methylbut-2-enyl diphosphate: serine 257, serine 258, asparagine 259, and serine 306. Dimethylallyl diphosphate contacts are provided by serine 257, serine 258, asparagine 259, and serine 306. Positions 257, 258, 259, and 306 each coordinate isopentenyl diphosphate.

It belongs to the IspH family. Requires [4Fe-4S] cluster as cofactor.

The catalysed reaction is isopentenyl diphosphate + 2 oxidized [2Fe-2S]-[ferredoxin] + H2O = (2E)-4-hydroxy-3-methylbut-2-enyl diphosphate + 2 reduced [2Fe-2S]-[ferredoxin] + 2 H(+). The enzyme catalyses dimethylallyl diphosphate + 2 oxidized [2Fe-2S]-[ferredoxin] + H2O = (2E)-4-hydroxy-3-methylbut-2-enyl diphosphate + 2 reduced [2Fe-2S]-[ferredoxin] + 2 H(+). The protein operates within isoprenoid biosynthesis; dimethylallyl diphosphate biosynthesis; dimethylallyl diphosphate from (2E)-4-hydroxy-3-methylbutenyl diphosphate: step 1/1. It functions in the pathway isoprenoid biosynthesis; isopentenyl diphosphate biosynthesis via DXP pathway; isopentenyl diphosphate from 1-deoxy-D-xylulose 5-phosphate: step 6/6. Functionally, catalyzes the conversion of 1-hydroxy-2-methyl-2-(E)-butenyl 4-diphosphate (HMBPP) into a mixture of isopentenyl diphosphate (IPP) and dimethylallyl diphosphate (DMAPP). Acts in the terminal step of the DOXP/MEP pathway for isoprenoid precursor biosynthesis. The protein is 4-hydroxy-3-methylbut-2-enyl diphosphate reductase of Chlorobium phaeobacteroides (strain DSM 266 / SMG 266 / 2430).